The sequence spans 178 residues: Adenine phosphoribosyltransferase (178 aa).

The protein belongs to the purine/pyrimidine phosphoribosyltransferase family. In terms of assembly, homodimer.

Its subcellular location is the cytoplasm. It carries out the reaction AMP + diphosphate = 5-phospho-alpha-D-ribose 1-diphosphate + adenine. It functions in the pathway purine metabolism; AMP biosynthesis via salvage pathway; AMP from adenine: step 1/1. Catalyzes a salvage reaction resulting in the formation of AMP, that is energically less costly than de novo synthesis. The protein is Adenine phosphoribosyltransferase of Cereibacter sphaeroides (strain ATCC 17025 / ATH 2.4.3) (Rhodobacter sphaeroides).